Here is a 142-residue protein sequence, read N- to C-terminus: Large ribosomal subunit protein uL13 (142 aa).

Belongs to the universal ribosomal protein uL13 family. In terms of assembly, part of the 50S ribosomal subunit.

This protein is one of the early assembly proteins of the 50S ribosomal subunit, although it is not seen to bind rRNA by itself. It is important during the early stages of 50S assembly. In Acinetobacter baumannii (strain AB0057), this protein is Large ribosomal subunit protein uL13.